The primary structure comprises 396 residues: Putative carbamoyltransferase YgeW (396 aa).

Residues 71–74, Gln98, 165–168, and 330–331 each bind carbamoyl phosphate; these read STRT, HPTQ, and CL.

It belongs to the aspartate/ornithine carbamoyltransferase superfamily. In terms of assembly, homotrimer.

This is Putative carbamoyltransferase YgeW (ygeW) from Escherichia coli O157:H7.